The sequence spans 378 residues: Glutamate 5-kinase (378 aa).

Lys17 is an ATP binding site. Residues Ser58, Asp145, and Asn157 each coordinate substrate. Residues 177–178 (TD) and 221–227 (TGGMMTK) contribute to the ATP site. The region spanning 286–364 (VGKLYLDSGA…KEIPTILGYV (79 aa)) is the PUA domain.

This sequence belongs to the glutamate 5-kinase family.

It localises to the cytoplasm. It catalyses the reaction L-glutamate + ATP = L-glutamyl 5-phosphate + ADP. It participates in amino-acid biosynthesis; L-proline biosynthesis; L-glutamate 5-semialdehyde from L-glutamate: step 1/2. In terms of biological role, catalyzes the transfer of a phosphate group to glutamate to form L-glutamate 5-phosphate. In Nostoc sp. (strain PCC 7120 / SAG 25.82 / UTEX 2576), this protein is Glutamate 5-kinase.